The primary structure comprises 786 residues: Sucrose synthase (786 aa).

Residues 259–736 (MIFSLVVLSP…ALKRVEERYN (478 aa)) form a GT-B glycosyltransferase region.

This sequence belongs to the glycosyltransferase 1 family. As to quaternary structure, homotetramer.

It carries out the reaction an NDP-alpha-D-glucose + D-fructose = a ribonucleoside 5'-diphosphate + sucrose + H(+). Functionally, catalyzes the reversible conversion of sucrose and a nucleotide disphosphate (NDP) into fructose and NDP-glucose; although the reaction is freely reversible in vitro, the physiological reaction seems to be sucrose cleavage. Unlike characterized plant enzymes prefers ADP as a cosubstrate, whereas plants prefer UDP. Its preference for ADP over UDP suggests it may directly link sucrose and glycogen metabolism. This Denitrovibrio acetiphilus (strain DSM 12809 / NBRC 114555 / N2460) protein is Sucrose synthase.